Consider the following 269-residue polypeptide: Interleukin-1 beta (269 aa).

Positions 1–116 (MAEVPELASE…TWDNEAYVHD (116 aa)) are cleaved as a propeptide — removed in mature form; by CASP1. The Involved in interaction with TMED10 C-terminus motif lies at 228 to 241 (FESAQFPNWYISTS).

The protein belongs to the IL-1 family. In terms of assembly, monomer. In its precursor form, weakly interacts with full-length MEFV; the mature cytokine does not interact at all. Interacts with integrins ITGAV:ITGBV and ITGA5:ITGB1; integrin-binding is required for IL1B signaling. Interacts with cargo receptor TMED10; the interaction is direct and is required for the secretion of IL1B mature form. Interacts with HSP90AB1; the interaction facilitates cargo translocation into the ERGIC. Interacts with HSP90B1; the interaction facilitates cargo translocation into the ERGIC. In terms of processing, activation of the IL1B precursor involves a CASP1-catalyzed proteolytic cleavage. Processing and secretion are temporarily associated. Post-translationally, (Microbial infection) Cleavage by S.pyogenes cysteine protease SpeB promotes its activation independently of CASP1. Expressed in activated monocytes/macrophages (at protein level).

It localises to the cytoplasm. The protein resides in the cytosol. Its subcellular location is the secreted. It is found in the lysosome. The protein localises to the extracellular exosome. Its activity is regulated as follows. (Microbial infection) Cleavage by S.pyogenes cysteine protease SpeB promotes its activation independently of CASP1. SpeB-mediated maturation of IL1B plays a dual role depending on infection site: while IL1B inflammatory response prevents bacterial growth during invasive skin infections, it promotes streptococcal infection of the nasopharynx by disrupting colonization resistance mediated by the microbiota. In terms of biological role, potent pro-inflammatory cytokine. Initially discovered as the major endogenous pyrogen, induces prostaglandin synthesis, neutrophil influx and activation, T-cell activation and cytokine production, B-cell activation and antibody production, and fibroblast proliferation and collagen production. Promotes Th17 differentiation of T-cells. Synergizes with IL12/interleukin-12 to induce IFNG synthesis from T-helper 1 (Th1) cells. Plays a role in angiogenesis by inducing VEGF production synergistically with TNF and IL6. Involved in transduction of inflammation downstream of pyroptosis: its mature form is specifically released in the extracellular milieu by passing through the gasdermin-D (GSDMD) pore. Acts as a sensor of S.pyogenes infection in skin: cleaved and activated by pyogenes SpeB protease, leading to an inflammatory response that prevents bacterial growth during invasive skin infection. The chain is Interleukin-1 beta from Homo sapiens (Human).